Reading from the N-terminus, the 156-residue chain is Cytochrome c-type biogenesis protein CcmE 2 (156 aa).

Topologically, residues 1–8 (MNPQRRRR) are cytoplasmic. Residues 9–29 (LWWVLALLLAGGLATTLVSMA) traverse the membrane as a helical; Signal-anchor for type II membrane protein segment. The Periplasmic portion of the chain corresponds to 30 to 156 (LQRNVAYLYT…AAANQGGALR (127 aa)). Heme is bound by residues H123 and Y127. Positions 135–156 (KMGSAHRKHDVPAAANQGGALR) are disordered.

It belongs to the CcmE/CycJ family.

The protein localises to the cell inner membrane. Heme chaperone required for the biogenesis of c-type cytochromes. Transiently binds heme delivered by CcmC and transfers the heme to apo-cytochromes in a process facilitated by CcmF and CcmH. This Xanthomonas oryzae pv. oryzae (strain MAFF 311018) protein is Cytochrome c-type biogenesis protein CcmE 2.